The sequence spans 1521 residues: Protein OPAQUE1 (1521 aa).

One can recognise a Myosin N-terminal SH3-like domain in the interval 4–53; sequence RKGLKVWVEEKGEGWVEAEVVEAKERAVVVFSSQRKKITVSPEKLLPRDT. The Myosin motor domain occupies 60-731; that stretch reads GHVDDMTKLT…QIAILDMRRA (672 aa). Residues 155–162 and 208–216 each bind ATP; these read GESGAGKT and NDNSSRFGK. Actin-binding stretches follow at residues 493 to 527, 529 to 552, 587 to 612, and 612 to 634; these read LIEKKPIGIIALLDEACMFPKSTHETFATKMFRNF, SHLRLERTKFSETDFTISHYAGKV, FTSLPEESIRSSYKFSSVASRFKLQL, and LQALMETLNSTEPHYVRCVKPNS. 6 consecutive IQ domains span residues 733-755, 756-778, 781-803, 804-826, 829-851, and 852-874; these read ILDNAARHIQGRFRTFITRKEFV, KTREASISIQAYCRGCLARKMFA, RETAAAVIVQKYVRRWLLRRAHL, QACLAALLIQSYIRGFIARRYFS, REHKAATVIQSTWRRRKFVILFQ, and NYRQATVAIQCSWRQKLARKELR. Coiled-coil stretches lie at residues 870 to 910 and 974 to 1050; these read RKEL…ERRL and SAEA…LRQK. Positions 1162–1459 constitute a Dilute domain; that stretch reads DHVIEAINDV…VAAMREMVNK (298 aa).

The protein belongs to the TRAFAC class myosin-kinesin ATPase superfamily. Myosin family. Plant myosin class XI subfamily. In terms of assembly, interacts (via C-terminus) with HIP (via C-terminus), but not with zeins, FL1 or intrinsic proteins of protein bodies. As to expression, high expression in kernels and stems, intermediate in ears and leaves, and low in roots, silks and tassels.

Its subcellular location is the cytoplasm. Myosin XI motor protein required for endoplasmic reticulum motility and protein body formation. May function by binding with its tail domain to receptor proteins on membranes and exerting force with its N-terminal motor domain against actin filaments, thereby transporting its cargo along polarized actin cables. The protein is Protein OPAQUE1 of Zea mays (Maize).